A 745-amino-acid polypeptide reads, in one-letter code: Phosphoribosylformylglycinamidine synthase subunit PurL (745 aa).

Residue H50 is part of the active site. Residues Y53 and K92 each coordinate ATP. Residue E94 participates in Mg(2+) binding. Substrate is bound by residues 95–98 and R117; that span reads SHNH. Catalysis depends on H96, which acts as the Proton acceptor. D118 lines the Mg(2+) pocket. Q241 contacts substrate. Residue D269 participates in Mg(2+) binding. 313 to 315 contacts substrate; sequence ESQ. Residues D495 and G532 each contribute to the ATP site. N533 is a binding site for Mg(2+). S535 contributes to the substrate binding site.

The protein belongs to the FGAMS family. In terms of assembly, monomer. Part of the FGAM synthase complex composed of 1 PurL, 1 PurQ and 2 PurS subunits.

Its subcellular location is the cytoplasm. The enzyme catalyses N(2)-formyl-N(1)-(5-phospho-beta-D-ribosyl)glycinamide + L-glutamine + ATP + H2O = 2-formamido-N(1)-(5-O-phospho-beta-D-ribosyl)acetamidine + L-glutamate + ADP + phosphate + H(+). The protein operates within purine metabolism; IMP biosynthesis via de novo pathway; 5-amino-1-(5-phospho-D-ribosyl)imidazole from N(2)-formyl-N(1)-(5-phospho-D-ribosyl)glycinamide: step 1/2. Its function is as follows. Part of the phosphoribosylformylglycinamidine synthase complex involved in the purines biosynthetic pathway. Catalyzes the ATP-dependent conversion of formylglycinamide ribonucleotide (FGAR) and glutamine to yield formylglycinamidine ribonucleotide (FGAM) and glutamate. The FGAM synthase complex is composed of three subunits. PurQ produces an ammonia molecule by converting glutamine to glutamate. PurL transfers the ammonia molecule to FGAR to form FGAM in an ATP-dependent manner. PurS interacts with PurQ and PurL and is thought to assist in the transfer of the ammonia molecule from PurQ to PurL. This chain is Phosphoribosylformylglycinamidine synthase subunit PurL, found in Allorhizobium ampelinum (strain ATCC BAA-846 / DSM 112012 / S4) (Agrobacterium vitis (strain S4)).